Consider the following 628-residue polypeptide: DNA-directed RNA polymerase subunit gamma (628 aa).

Zn(2+) is bound by residues cysteine 71, cysteine 73, cysteine 86, and cysteine 89. Aspartate 467, aspartate 469, and aspartate 471 together coordinate Mg(2+).

Belongs to the RNA polymerase beta' chain family. RpoC1 subfamily. In cyanobacteria the RNAP catalytic core is composed of 2 alpha, 1 beta, 1 beta', 1 gamma and 1 omega subunit. When a sigma factor is associated with the core the holoenzyme is formed, which can initiate transcription. The cofactor is Mg(2+). It depends on Zn(2+) as a cofactor.

It carries out the reaction RNA(n) + a ribonucleoside 5'-triphosphate = RNA(n+1) + diphosphate. In terms of biological role, DNA-dependent RNA polymerase catalyzes the transcription of DNA into RNA using the four ribonucleoside triphosphates as substrates. The chain is DNA-directed RNA polymerase subunit gamma from Crocosphaera subtropica (strain ATCC 51142 / BH68) (Cyanothece sp. (strain ATCC 51142)).